The following is an 875-amino-acid chain: Alanine--tRNA ligase (875 aa).

Zn(2+)-binding residues include H565, H569, C666, and H670.

This sequence belongs to the class-II aminoacyl-tRNA synthetase family. Zn(2+) is required as a cofactor.

The protein resides in the cytoplasm. It carries out the reaction tRNA(Ala) + L-alanine + ATP = L-alanyl-tRNA(Ala) + AMP + diphosphate. Catalyzes the attachment of alanine to tRNA(Ala) in a two-step reaction: alanine is first activated by ATP to form Ala-AMP and then transferred to the acceptor end of tRNA(Ala). Also edits incorrectly charged Ser-tRNA(Ala) and Gly-tRNA(Ala) via its editing domain. The sequence is that of Alanine--tRNA ligase from Methylibium petroleiphilum (strain ATCC BAA-1232 / LMG 22953 / PM1).